A 125-amino-acid chain; its full sequence is Protein ApaG (125 aa).

In terms of domain architecture, ApaG spans 1–125 (MINSPRVCIQ…FRLAVPTLIH (125 aa)).

The protein is Protein ApaG of Salmonella arizonae (strain ATCC BAA-731 / CDC346-86 / RSK2980).